The primary structure comprises 263 residues: Nicotinamide riboside transporter PnuC (263 aa).

Residues 1–40 (MQYGMDSFGLRGIPHQVFIKKKEGKIMSLAWWKRELFGGW) are Cytoplasmic-facing. A helical transmembrane segment spans residues 41 to 61 (THFEAVWLLMFLGIQAVVFVF). N62 is a topological domain (periplasmic). The helical transmembrane segment at 63-83 (PDSWLASVAAVTGILCVVFVG) threads the bilayer. At 84–86 (KGK) the chain is on the cytoplasmic side. Residues 87–107 (ISNYLFGLISVSLYAYVSYTF) form a helical membrane-spanning segment. The Periplasmic portion of the chain corresponds to 108 to 109 (KL). Residues 110 to 131 (YGEMMLNLLVYVPVQFVGFAMW) form a helical membrane-spanning segment. Q124 provides a ligand contact to beta-nicotinamide D-riboside. The Cytoplasmic segment spans residues 132 to 155 (RKHMALGETAETEEVKAKALTVRQ). Residues 156-177 (WLLVVAASVVGTSVYIEWLHHL) form a helical membrane-spanning segment. Over 178–180 (GSA) the chain is Periplasmic. The chain crosses the membrane as a helical span at residues 181-201 (LPTLDGVTVVVSIVAQVLMIL). Q196 lines the beta-nicotinamide D-riboside pocket. Residues 202-205 (RYRE) lie on the Cytoplasmic side of the membrane. A helical transmembrane segment spans residues 206 to 226 (QWALWIVVNILTISLWAVAWF). Beta-nicotinamide D-riboside contacts are provided by W210 and N214. Over 227–232 (KNGETS) the chain is Periplasmic. The chain crosses the membrane as a helical span at residues 233 to 253 (LPLLLMYVMYLCNSVYGYINW). Y242 provides a ligand contact to beta-nicotinamide D-riboside. Over 254 to 263 (TKLVKRHSGQ) the chain is Cytoplasmic.

Belongs to the nicotinamide ribonucleoside (NR) uptake permease (TC 4.B.1) family. Homotrimer.

The protein localises to the cell inner membrane. In terms of biological role, required for nicotinamide riboside transport across the inner membrane. The protein is Nicotinamide riboside transporter PnuC of Neisseria mucosa (strain ATCC 25996 / DSM 4631 / NCTC 10774 / M26).